Here is a 182-residue protein sequence, read N- to C-terminus: MLVLVLGDLHIPHRCNSLPAKFKKLLVPGKIQHILCTGNLCTKESYDYLKTLAGDVHIVRGDFDESLNYPEQKVVTVGQFKIGLIHGHQVIPWGDMASLALLQRQFDVDILISGHTHKFEAFEHENKFYINPGSATGAYNALETNIIPSFVLMDIQASTVVTYVYQLIGDDVKVERIEYKKS.

K50 bears the N6-acetyllysine mark.

It belongs to the VPS29 family. In terms of assembly, component of the commander complex consisting of the CCC subcomplex and the retriever subcomplex. Component of the heterotrimeric retriever complex formed by VPS26C, VPS29 and VPS35L; within the complex interacts with VPS35L. Component of the heterotrimeric retromer cargo-selective complex (CSC), also described as vacuolar protein sorting subcomplex (VPS), formed by VPS26 (VPS26A or VPS26B), VPS29 and VPS35. The CSC has a highly elongated structure with VPS26 and VPS29 binding independently at opposite distal ends of VPS35 as central platform. The CSC is believed to associate with variable sorting nexins to form functionally distinct retromer complex variants. The originally described retromer complex (also called SNX-BAR retromer) is a pentamer containing the CSC and a heterodimeric membrane-deforming subcomplex formed between SNX1 or SNX2 and SNX5 or SNX6 (also called SNX-BAR subcomplex); the respective CSC and SNX-BAR subcomplexes associate with low affinity. The CSC associates with SNX3 to form a SNX3-retromer complex. The CSC associates with SNX27, the WASH complex and the SNX-BAR subcomplex to form the SNX27-retromer complex. Interacts with VPS26A, VPS35, SNX1, SNX2, SNX3, SNX27, WASHC5. Interacts with TBC1D5; this interaction is blocked by VPS35L in the retriever complex. Interacts with SNX17; the interaction is indirect; SNX17 (via its C-terminus) interacts with the retriever complex (via VPS26C and VPS35L). Interacts with VPS26B and ANKRD27.

It localises to the cytoplasm. It is found in the membrane. The protein localises to the endosome membrane. Its subcellular location is the early endosome. The protein resides in the late endosome. In terms of biological role, component of the commander complex that is essential for endosomal recycling of transmembrane cargos; the commander complex is composed of the CCC subcomplex and the retriever subcomplex. Component of the retriever complex, which is a heterotrimeric complex related to retromer cargo-selective complex (CSC) and essential for retromer-independent retrieval and recycling of numerous cargos such as integrin alpha-5/beta-1 (ITGA5:ITGB1). Component of the retromer cargo-selective complex (CSC). The CSC is believed to be the core functional component of retromer or respective retromer complex variants acting to prevent missorting of selected transmembrane cargo proteins into the lysosomal degradation pathway. The recruitment of the CSC to the endosomal membrane involves RAB7A and SNX3. The SNX-BAR retromer mediates retrograde transport of cargo proteins from endosomes to the trans-Golgi network (TGN) and is involved in endosome-to-plasma membrane transport for cargo protein recycling. The SNX3-retromer mediates the retrograde endosome-to-TGN transport of WLS distinct from the SNX-BAR retromer pathway. The SNX27-retromer is believed to be involved in endosome-to-plasma membrane trafficking and recycling of a broad spectrum of cargo proteins. The CSC seems to act as recruitment hub for other proteins, such as the WASH complex and TBC1D5. Required to regulate transcytosis of the polymeric immunoglobulin receptor (pIgR-pIgA). In the endosomes, retriever complex drives the retrieval and recycling of NxxY-motif-containing cargo proteins by coupling to SNX17, a cargo essential for the homeostatic maintenance of numerous cell surface proteins associated with processes that include cell migration, cell adhesion, nutrient supply and cell signaling. The recruitment of the retriever complex to the endosomal membrane involves CCC and WASH complexes. Involved in GLUT1 endosome-to-plasma membrane trafficking; the function is dependent of association with ANKRD27. The sequence is that of Vacuolar protein sorting-associated protein 29 from Rattus norvegicus (Rat).